The following is a 309-amino-acid chain: Methionyl-tRNA formyltransferase (309 aa).

A (6S)-5,6,7,8-tetrahydrofolate-binding site is contributed by 112 to 115 (SLLP).

This sequence belongs to the Fmt family.

The catalysed reaction is L-methionyl-tRNA(fMet) + (6R)-10-formyltetrahydrofolate = N-formyl-L-methionyl-tRNA(fMet) + (6S)-5,6,7,8-tetrahydrofolate + H(+). Its function is as follows. Attaches a formyl group to the free amino group of methionyl-tRNA(fMet). The formyl group appears to play a dual role in the initiator identity of N-formylmethionyl-tRNA by promoting its recognition by IF2 and preventing the misappropriation of this tRNA by the elongation apparatus. In Bartonella quintana (strain Toulouse) (Rochalimaea quintana), this protein is Methionyl-tRNA formyltransferase.